We begin with the raw amino-acid sequence, 659 residues long: Protein SCARECROW 1 (659 aa).

Disordered stretches follow at residues 1-33 (MGSS…ITSL) and 188-285 (SDPA…KQRD). Residues 190-228 (PAPPPPPPPSHPALLPPDATAPPPPPTSVAALPPPPPPQ) show a composition bias toward pro residues. Positions 258-271 (AAAAAAAAAAALAA) are enriched in low complexity. Positions 258–289 (AAAAAAAAAAALAAAKERKEEQRRKQRDEEGL) form a coiled coil. Positions 272–285 (AKERKEEQRRKQRD) are enriched in basic and acidic residues. The region spanning 282–652 (KQRDEEGLHL…LCLLTASAWR (371 aa)) is the GRAS domain. The tract at residues 289-353 (LHLLTLLLQC…VSSCLGLYAP (65 aa)) is leucine repeat I (LRI). The LxCxE motif signature appears at 296–300 (LQCAE). The tract at residues 372–437 (FQVFNGISPF…GGPPRVRLTG (66 aa)) is VHIID. The VHIID motif lies at 403–407 (VHIID). Residues 447–479 (ATGKRLSDFADTLGLPFEFCPVADKAGNLDPEK) are leucine repeat II (LRII). Positions 488-575 (VAVHWLRHSL…QQLLSREIRN (88 aa)) are PFYRE. The SAW stretch occupies residues 578–652 (AVGGPARTGD…LCLLTASAWR (75 aa)).

This sequence belongs to the GRAS family. In terms of assembly, interacts with SHR1, but not with SHR2.

It is found in the nucleus. In terms of biological role, transcription factor required for quiescent center cells specification and maintenance of surrounding stem cells, and for the asymmetric cell division involved in radial pattern formation in roots. Essential for cell division but not differentiation of the ground tissue. Regulates the radial organization of the shoot axial organs. Restricts SHR movment and sequesters it into the nucleus of the endodermis. This chain is Protein SCARECROW 1 (SCR1), found in Oryza sativa subsp. indica (Rice).